Reading from the N-terminus, the 406-residue chain is MAVMDPWLLITIIVGFGMAWAIGANDAANSMSTAVGAKAITPKQAVLIAGVLEFTGAYFFGKSVTETIRKGILYPDRITDPTVLIYGSVAALLAATIWLVIATKFGLPVSTTHSIIGGIVGYGIVYAGFSIVNWGKMTQVVLSWILSPIIGAIMAFLVFKALTKSIFERKDPVRSSKIWSPFWIGLAFVVIGTMFYIKVLHGKSLKTGVLFYGIPAGLVVFLILFLTLRVKFPSSDPFIGVESIFRRVQVITSGYVALAHGANDVANAIGPVAAVYAVATMGMAGMKVPVPRWILAMGGLGIAIGVATYGYRVMETVGKKITELTNTRGFTIDFSAATVVLVASWLGLPISTTHVVVGAVIGVGLARGVKAINKDIVRDIIISWFVTVPVAALISAFLFKILMIVG.

10 consecutive transmembrane segments (helical) span residues 2-22 (AVMD…AWAI), 45-65 (AVLI…KSVT), 82-102 (TVLI…LVIA), 115-135 (IIGG…VNWG), 139-159 (QVVL…FLVF), 182-202 (FWIG…VLHG), 208-228 (GVLF…FLTL), 288-308 (VPVP…GVAT), 324-346 (LTNT…ASWL), and 385-405 (FVTV…LMIV).

Belongs to the inorganic phosphate transporter (PiT) (TC 2.A.20) family.

The protein localises to the cell membrane. In terms of biological role, potential transporter for phosphate. The chain is Putative phosphate permease TK2061 from Thermococcus kodakarensis (strain ATCC BAA-918 / JCM 12380 / KOD1) (Pyrococcus kodakaraensis (strain KOD1)).